We begin with the raw amino-acid sequence, 570 residues long: Protein misato homolog 1 (570 aa).

Position 495 is a phosphoserine (serine 495).

This sequence belongs to the misato family. Present in all cell lines tested (at protein level). Widely expressed.

The protein localises to the mitochondrion outer membrane. The protein resides in the cytoplasm. In terms of biological role, involved in the regulation of mitochondrial distribution and morphology. Required for mitochondrial fusion and mitochondrial network formation. The protein is Protein misato homolog 1 (MSTO1) of Homo sapiens (Human).